The chain runs to 151 residues: Large ribosomal subunit protein bL17 (151 aa).

The tract at residues 118–151 is disordered; sequence EAKQPPRKEKAKKPAPVQAEEASATPASEEKAQD. The span at 131–144 shows a compositional bias: low complexity; the sequence is PAPVQAEEASATPA.

The protein belongs to the bacterial ribosomal protein bL17 family. As to quaternary structure, part of the 50S ribosomal subunit. Contacts protein L32.

The chain is Large ribosomal subunit protein bL17 from Syntrophobacter fumaroxidans (strain DSM 10017 / MPOB).